A 1229-amino-acid chain; its full sequence is uncharacterized protein (1229 aa).

The signal sequence occupies residues 1-19; that stretch reads MKYFLLLFLLVLSFTLVES. Residues N238, N270, N370, N538, N691, and N701 are each glycosylated (N-linked (GlcNAc...) asparagine). The region spanning 678–813 is the Galectin 1 domain; that stretch reads RMVNFANVME…QWNIDTVKMN (136 aa). Polar residues predominate over residues 818-829; the sequence is HTTTVEPSTPLE. Residues 818–903 form a disordered region; that stretch reads HTTTVEPSTP…TLPPTTTPYN (86 aa). A compositionally biased stretch (low complexity) spans 830–846; that stretch reads TASTSQSTPSATLTSTT. Positions 847–869 are enriched in polar residues; that stretch reads ENIPSTSKIPETSTTQRPTSPIL. Positions 870-901 are enriched in low complexity; sequence TSGATSTSSSTESTTTSPTTSTTTTLPPTTTP. N-linked (GlcNAc...) asparagine glycans are attached at residues N903, N938, and N948. In terms of domain architecture, Galectin 2 spans 925–1059; that stretch reads RPVVFSRYME…ESTIDTVSMA (135 aa). The disordered stretch occupies residues 1061–1087; the sequence is VRPPTTPTTTTSTTTTTTPKLTTTSTL. A compositionally biased stretch (low complexity) spans 1067–1087; it reads PTTTTSTTTTTTPKLTTTSTL. An N-linked (GlcNAc...) asparagine glycan is attached at N1146.

This is an uncharacterized protein from Caenorhabditis elegans.